Consider the following 78-residue polypeptide: Putative membrane protein insertion efficiency factor (78 aa).

It belongs to the UPF0161 family.

Its subcellular location is the cell membrane. Functionally, could be involved in insertion of integral membrane proteins into the membrane. The protein is Putative membrane protein insertion efficiency factor of Bacillus thuringiensis subsp. konkukian (strain 97-27).